A 224-amino-acid polypeptide reads, in one-letter code: Ribonuclease T (224 aa).

The 176-residue stretch at 20 to 195 (VVIDVETAGF…YDTQKTAELF (176 aa)) folds into the Exonuclease domain. Mg(2+) is bound by residues aspartate 23, glutamate 25, histidine 182, and aspartate 187. The active-site Proton donor/acceptor is the histidine 182.

Belongs to the RNase T family. In terms of assembly, homodimer. Mg(2+) is required as a cofactor.

Functionally, trims short 3' overhangs of a variety of RNA species, leaving a one or two nucleotide 3' overhang. Responsible for the end-turnover of tRNA: specifically removes the terminal AMP residue from uncharged tRNA (tRNA-C-C-A). Also appears to be involved in tRNA biosynthesis. This Vibrio cholerae serotype O1 (strain ATCC 39315 / El Tor Inaba N16961) protein is Ribonuclease T.